The sequence spans 693 residues: Transcription activator of gluconeogenesis BC1G_14637 (693 aa).

Acidic residues predominate over residues 1–12 (MSGETEIDDPEV). The interval 1–75 (MSGETEIDDP…KFDPKDPLRP (75 aa)) is disordered. A compositionally biased stretch (basic and acidic residues) spans 21–49 (YSDHEQELDVIGKEGDNQEMAEQKVRPDG). Residues 52-62 (NGNTVGATATV) show a composition bias toward polar residues. Over residues 65-74 (PKFDPKDPLR) the composition is skewed to basic and acidic residues. Residues 84–112 (CFACQRAHLTCGDERPCQRCIKRGLADAC) constitute a DNA-binding region (zn(2)-C6 fungal-type). Composition is skewed to polar residues over residues 144 to 155 (SSNRATAASTPT) and 275 to 287 (SAET…SAGM). Disordered stretches follow at residues 144–170 (SSNR…QPDT), 273–299 (SGSA…FSNN), 350–413 (TSGS…RNRD), and 531–567 (NLNT…DSNP). Positions 356 to 367 (SPSTDASPAAST) are enriched in low complexity. Residues 369 to 379 (GFESSPTTTNY) show a composition bias toward polar residues. The span at 394–408 (KSGPSGKLGPSGILG) shows a compositional bias: low complexity.

It belongs to the ERT1/acuK family.

The protein resides in the nucleus. Functionally, transcription factor which regulates nonfermentable carbon utilization. Activator of gluconeogenetic genes. This is Transcription activator of gluconeogenesis BC1G_14637 from Botryotinia fuckeliana (strain B05.10) (Noble rot fungus).